A 445-amino-acid chain; its full sequence is 3-phosphoshikimate 1-carboxyvinyltransferase (445 aa).

3-phosphoshikimate is bound by residues lysine 28, serine 29, and arginine 33. Residue lysine 28 coordinates phosphoenolpyruvate. Glycine 101 and arginine 129 together coordinate phosphoenolpyruvate. Positions 175, 177, 328, and 355 each coordinate 3-phosphoshikimate. Residue glutamine 177 participates in phosphoenolpyruvate binding. Aspartate 328 (proton acceptor) is an active-site residue. 2 residues coordinate phosphoenolpyruvate: arginine 359 and arginine 402.

Belongs to the EPSP synthase family. As to quaternary structure, monomer.

It localises to the cytoplasm. It carries out the reaction 3-phosphoshikimate + phosphoenolpyruvate = 5-O-(1-carboxyvinyl)-3-phosphoshikimate + phosphate. The protein operates within metabolic intermediate biosynthesis; chorismate biosynthesis; chorismate from D-erythrose 4-phosphate and phosphoenolpyruvate: step 6/7. Functionally, catalyzes the transfer of the enolpyruvyl moiety of phosphoenolpyruvate (PEP) to the 5-hydroxyl of shikimate-3-phosphate (S3P) to produce enolpyruvyl shikimate-3-phosphate and inorganic phosphate. The sequence is that of 3-phosphoshikimate 1-carboxyvinyltransferase from Rhodopseudomonas palustris (strain HaA2).